Reading from the N-terminus, the 182-residue chain is Isopentenyl-diphosphate Delta-isomerase (182 aa).

Positions 25 and 32 each coordinate Mn(2+). The 135-residue stretch at 30-164 folds into the Nudix hydrolase domain; sequence RLHLAFSSWL…PWAFSPWMVM (135 aa). Residue cysteine 67 is part of the active site. Histidine 69 lines the Mn(2+) pocket. Residue glutamate 87 participates in Mg(2+) binding. The Mn(2+) site is built by glutamate 114 and glutamate 116. Glutamate 116 is an active-site residue.

Belongs to the IPP isomerase type 1 family. As to quaternary structure, homodimer. Requires Mg(2+) as cofactor. Mn(2+) serves as cofactor.

Its subcellular location is the cytoplasm. It catalyses the reaction isopentenyl diphosphate = dimethylallyl diphosphate. Its pathway is isoprenoid biosynthesis; dimethylallyl diphosphate biosynthesis; dimethylallyl diphosphate from isopentenyl diphosphate: step 1/1. Its function is as follows. Catalyzes the 1,3-allylic rearrangement of the homoallylic substrate isopentenyl (IPP) to its highly electrophilic allylic isomer, dimethylallyl diphosphate (DMAPP). This chain is Isopentenyl-diphosphate Delta-isomerase, found in Escherichia coli O139:H28 (strain E24377A / ETEC).